The sequence spans 342 residues: Inositol-tetrakisphosphate 1-kinase 5 (342 aa).

Lysine 25 and lysine 67 together coordinate 1D-myo-inositol 1,3,4-trisphosphate. ATP-binding residues include arginine 102 and lysine 154. Residues histidine 165 and lysine 197 each contribute to the 1D-myo-inositol 1,3,4-trisphosphate site. ATP is bound by residues 186-197 (QEFVNHGGVIFK) and serine 212. Aspartate 283, aspartate 298, and asparagine 300 together coordinate Mg(2+). Position 300 (asparagine 300) interacts with 1D-myo-inositol 1,3,4-trisphosphate.

It belongs to the ITPK1 family. In terms of assembly, monomer. Mg(2+) is required as a cofactor. In terms of tissue distribution, expressed in roots, leaves, flowers, anthers and embryos.

The catalysed reaction is 1D-myo-inositol 3,4,5,6-tetrakisphosphate + ATP = 1D-myo-inositol 1,3,4,5,6-pentakisphosphate + ADP + H(+). It carries out the reaction 1D-myo-inositol 1,3,4-trisphosphate + ATP = 1D-myo-inositol 1,3,4,5-tetrakisphosphate + ADP + H(+). The enzyme catalyses 1D-myo-inositol 1,3,4-trisphosphate + ATP = 1D-myo-inositol 1,3,4,6-tetrakisphosphate + ADP + H(+). Its function is as follows. Kinase that can phosphorylate various inositol polyphosphate such as Ins(3,4,5,6)P4 or Ins(1,3,4)P3 and participates in phytic acid biosynthesis in developing seeds. Phytic acid is the primary storage form of phosphorus in cereal grains and other plant seeds. The protein is Inositol-tetrakisphosphate 1-kinase 5 (ITPK5) of Oryza sativa subsp. japonica (Rice).